We begin with the raw amino-acid sequence, 808 residues long: Sucrose synthase (808 aa).

Residues 271–753 (MLFRIALISP…GIERVYSTYT (483 aa)) are GT-B glycosyltransferase.

The protein belongs to the glycosyltransferase 1 family. In terms of assembly, probably a homotetramer.

The enzyme catalyses an NDP-alpha-D-glucose + D-fructose = a ribonucleoside 5'-diphosphate + sucrose + H(+). The catalysed reaction is ADP-alpha-D-glucose + D-fructose = sucrose + ADP + H(+). In terms of biological role, catalyzes the reversible conversion of sucrose and a nucleotide disphosphate (NDP) into fructose and NDP-glucose; although the reaction is freely reversible in vitro, the physiological reaction seems to be sucrose cleavage. Unlike characterized plant enzymes prefers ADP as a cosubstrate, whereas plants prefer UDP. Its preference for ADP over UDP suggests it may directly link sucrose and glycogen metabolism. In Thermosynechococcus vestitus (strain NIES-2133 / IAM M-273 / BP-1), this protein is Sucrose synthase.